A 311-amino-acid chain; its full sequence is Sulfate adenylyltransferase subunit 2 (311 aa).

The protein belongs to the PAPS reductase family. CysD subfamily. Heterodimer composed of CysD, the smaller subunit, and CysN.

The enzyme catalyses sulfate + ATP + H(+) = adenosine 5'-phosphosulfate + diphosphate. It functions in the pathway sulfur metabolism; hydrogen sulfide biosynthesis; sulfite from sulfate: step 1/3. Functionally, with CysN forms the ATP sulfurylase (ATPS) that catalyzes the adenylation of sulfate producing adenosine 5'-phosphosulfate (APS) and diphosphate, the first enzymatic step in sulfur assimilation pathway. APS synthesis involves the formation of a high-energy phosphoric-sulfuric acid anhydride bond driven by GTP hydrolysis by CysN coupled to ATP hydrolysis by CysD. The protein is Sulfate adenylyltransferase subunit 2 of Methylobacterium sp. (strain 4-46).